A 98-amino-acid polypeptide reads, in one-letter code: Thrombin-like enzyme cerastotin (98 aa).

The Peptidase S1 domain maps to 1-98; it reads VIGGAECNIN…IKKPVNGSTH (98 aa). Residues His41 and Asp85 each act as charge relay system in the active site. A glycan (N-linked (GlcNAc...) asparagine) is linked at Asn94.

The protein belongs to the peptidase S1 family. Snake venom subfamily. As to quaternary structure, monomer. Expressed by the venom gland.

The protein localises to the secreted. Its activity is regulated as follows. Inhibited by PMSF. Its function is as follows. Thrombin-like snake venom serine protease that preferentially cleaves the alpha-chain of fibrinogen (FGA). Induce platelet aggregation in the presence of exogenous fibrinogen. Possesses esterase and amidolytic activities. The protein is Thrombin-like enzyme cerastotin of Cerastes cerastes (Horned desert viper).